A 63-amino-acid polypeptide reads, in one-letter code: Large ribosomal subunit protein bL28 (63 aa).

This sequence belongs to the bacterial ribosomal protein bL28 family.

The chain is Large ribosomal subunit protein bL28 from Dictyoglomus thermophilum (strain ATCC 35947 / DSM 3960 / H-6-12).